The primary structure comprises 71 residues: Exodeoxyribonuclease 7 small subunit (71 aa).

It belongs to the XseB family. Heterooligomer composed of large and small subunits.

It is found in the cytoplasm. It catalyses the reaction Exonucleolytic cleavage in either 5'- to 3'- or 3'- to 5'-direction to yield nucleoside 5'-phosphates.. In terms of biological role, bidirectionally degrades single-stranded DNA into large acid-insoluble oligonucleotides, which are then degraded further into small acid-soluble oligonucleotides. The chain is Exodeoxyribonuclease 7 small subunit from Streptococcus equi subsp. equi (strain 4047).